A 212-amino-acid chain; its full sequence is Putative 3-methyladenine DNA glycosylase (212 aa).

Belongs to the DNA glycosylase MPG family.

In Nocardia farcinica (strain IFM 10152), this protein is Putative 3-methyladenine DNA glycosylase.